The chain runs to 99 residues: uncharacterized protein (99 aa).

A coiled-coil region spans residues Glu-43 to Gly-95.

This is an uncharacterized protein from Archaeoglobus fulgidus (strain ATCC 49558 / DSM 4304 / JCM 9628 / NBRC 100126 / VC-16).